Reading from the N-terminus, the 195-residue chain is Glycerol-3-phosphate acyltransferase (195 aa).

The next 6 helical transmembrane spans lie at 4–24, 53–73, 80–100, 110–130, 133–153, and 154–174; these read GLIL…GLLL, GLAA…VLIA, TAVW…WLGF, LGVL…IWLA, FLFR…PIAL, and YFLS…IVFI.

This sequence belongs to the PlsY family. As to quaternary structure, probably interacts with PlsX.

It localises to the cell inner membrane. It carries out the reaction an acyl phosphate + sn-glycerol 3-phosphate = a 1-acyl-sn-glycero-3-phosphate + phosphate. It participates in lipid metabolism; phospholipid metabolism. Catalyzes the transfer of an acyl group from acyl-phosphate (acyl-PO(4)) to glycerol-3-phosphate (G3P) to form lysophosphatidic acid (LPA). This enzyme utilizes acyl-phosphate as fatty acyl donor, but not acyl-CoA or acyl-ACP. The chain is Glycerol-3-phosphate acyltransferase from Mesorhizobium japonicum (strain LMG 29417 / CECT 9101 / MAFF 303099) (Mesorhizobium loti (strain MAFF 303099)).